A 380-amino-acid chain; its full sequence is Cytochrome b (380 aa).

4 consecutive transmembrane segments (helical) span residues 34-54 (FGSLLALCLMTQILTGLLLAM), 78-99 (WLIRNMHANGASFFFICIYMHI), 114-134 (WNTGILLLLTLMATAFVGYVL), and 179-199 (FFALHFLLPFMIAGLTLIHLT). Heme b contacts are provided by His-84 and His-98. The heme b site is built by His-183 and His-197. Residue His-202 coordinates a ubiquinone. Helical transmembrane passes span 227–247 (LKDILGLTLLLLPLTTMALFS), 289–309 (LGGVLALAASVLVLFLSPLLH), 321–341 (LSQLLFWTLVANLLILTWIGS), and 348–368 (FIIIGQLASTTYFIILLILFP).

This sequence belongs to the cytochrome b family. The cytochrome bc1 complex contains 11 subunits: 3 respiratory subunits (MT-CYB, CYC1 and UQCRFS1), 2 core proteins (UQCRC1 and UQCRC2) and 6 low-molecular weight proteins (UQCRH/QCR6, UQCRB/QCR7, UQCRQ/QCR8, UQCR10/QCR9, UQCR11/QCR10 and a cleavage product of UQCRFS1). This cytochrome bc1 complex then forms a dimer. It depends on heme b as a cofactor.

The protein resides in the mitochondrion inner membrane. Functionally, component of the ubiquinol-cytochrome c reductase complex (complex III or cytochrome b-c1 complex) that is part of the mitochondrial respiratory chain. The b-c1 complex mediates electron transfer from ubiquinol to cytochrome c. Contributes to the generation of a proton gradient across the mitochondrial membrane that is then used for ATP synthesis. The sequence is that of Cytochrome b (MT-CYB) from Hydrobates pelagicus (European storm-petrel).